We begin with the raw amino-acid sequence, 662 residues long: Glycogen debranching enzyme (662 aa).

Asp338 functions as the Nucleophile in the catalytic mechanism. Residue Glu373 is the Proton donor of the active site.

Belongs to the glycosyl hydrolase 13 family.

It catalyses the reaction Hydrolysis of (1-&gt;6)-alpha-D-glucosidic linkages to branches with degrees of polymerization of three or four glucose residues in limit dextrin.. The protein operates within glycan degradation; glycogen degradation. Its function is as follows. Removes maltotriose and maltotetraose chains that are attached by 1,6-alpha-linkage to the limit dextrin main chain, generating a debranched limit dextrin. This is Glycogen debranching enzyme from Yersinia pseudotuberculosis serotype O:1b (strain IP 31758).